A 246-amino-acid polypeptide reads, in one-letter code: Probable site-specific recombinase in afa region (246 aa).

The region spanning 40 to 225 is the Tyr recombinase domain; it reads ATPAYLLAPE…FALDMAATLA (186 aa). Catalysis depends on residues Arg75, Lys102, His177, Arg180, and His203. The active-site O-(3'-phospho-DNA)-tyrosine intermediate is Tyr212.

It belongs to the 'phage' integrase family.

The chain is Probable site-specific recombinase in afa region (int) from Escherichia coli.